The following is a 484-amino-acid chain: Glycogen synthase (484 aa).

Lys21 lines the ADP-alpha-D-glucose pocket.

The protein belongs to the glycosyltransferase 1 family. Bacterial/plant glycogen synthase subfamily.

The enzyme catalyses [(1-&gt;4)-alpha-D-glucosyl](n) + ADP-alpha-D-glucose = [(1-&gt;4)-alpha-D-glucosyl](n+1) + ADP + H(+). It participates in glycan biosynthesis; glycogen biosynthesis. Its function is as follows. Synthesizes alpha-1,4-glucan chains using ADP-glucose. This is Glycogen synthase from Pseudomonas syringae pv. tomato (strain ATCC BAA-871 / DC3000).